We begin with the raw amino-acid sequence, 79 residues long: Sec-independent protein translocase protein TatA (79 aa).

The helical transmembrane segment at 1–21 threads the bilayer; the sequence is MGSLSIWHWIVVIAVVLLLFG. Positions 42-60 are enriched in basic and acidic residues; sequence GLQDDEKTAEKPDAVKSLD. The tract at residues 42–79 is disordered; sequence GLQDDEKTAEKPDAVKSLDHNATTGTPPNRTDVGSKAV. The segment covering 61–70 has biased composition (polar residues); the sequence is HNATTGTPPN.

It belongs to the TatA/E family. As to quaternary structure, the Tat system comprises two distinct complexes: a TatABC complex, containing multiple copies of TatA, TatB and TatC subunits, and a separate TatA complex, containing only TatA subunits. Substrates initially bind to the TatABC complex, which probably triggers association of the separate TatA complex to form the active translocon.

The protein resides in the cell inner membrane. Functionally, part of the twin-arginine translocation (Tat) system that transports large folded proteins containing a characteristic twin-arginine motif in their signal peptide across membranes. TatA could form the protein-conducting channel of the Tat system. In Rhodopseudomonas palustris (strain HaA2), this protein is Sec-independent protein translocase protein TatA.